We begin with the raw amino-acid sequence, 268 residues long: MISDAIRAVILGIIEGVTEFLPVSSTGHLLLAERFFDLGSGNFWDTFTVLIQPGAILAIVVIYFAKLWRVALGMFSNPADRRFVIGVLAAFLPAVIVGLIAGKYIKELLFNPWVVCFSLIVGGAVLMWVDQLDHRPREHDATAFPLPMYVWIGIAQCVAMIPGVSRSGATIVSAMLLGADKRAAAEFSFFLAIPTMTGAFAYDFYKNHADMTTDDLGTVAIGFVVSFVTAIIVVKAFLSYVTRNGFTFFAWWRVIVGTLGLIALALGR.

7 helical membrane passes run 47 to 67 (FTVL…FAKL), 83 to 103 (FVIG…IAGK), 109 to 129 (LFNP…LMWV), 144 to 164 (FPLP…IPGV), 184 to 204 (AAEF…AYDF), 218 to 238 (TVAI…KAFL), and 246 to 266 (FTFF…ALAL).

The protein belongs to the UppP family.

It is found in the cell inner membrane. It carries out the reaction di-trans,octa-cis-undecaprenyl diphosphate + H2O = di-trans,octa-cis-undecaprenyl phosphate + phosphate + H(+). Catalyzes the dephosphorylation of undecaprenyl diphosphate (UPP). Confers resistance to bacitracin. The polypeptide is Undecaprenyl-diphosphatase (Nitrobacter winogradskyi (strain ATCC 25391 / DSM 10237 / CIP 104748 / NCIMB 11846 / Nb-255)).